Reading from the N-terminus, the 174-residue chain is MRSLPMFWRMAEEMARMPRLSSPFHAFFHEPPVWSVALPRNWQQIARWQEQEFAPPATVNKDGYKLTLDVKDYSELKVKVLDESVVLVEGKSEQQEAEQGGYSSRHFLRRFVLPEGYEADKVTSTLSSDGVLTISVPNPPGVQETLKEREVTIEQTGEPAKKSAEEPNDKAASQ.

The sHSP domain occupies 44-154 (QIARWQEQEF…TLKEREVTIE (111 aa)). Residue Thr152 is modified to Phosphothreonine. The interval 152–174 (TIEQTGEPAKKSAEEPNDKAASQ) is disordered. Basic and acidic residues predominate over residues 159–174 (PAKKSAEEPNDKAASQ).

Belongs to the small heat shock protein (HSP20) family.

This is Heat shock protein 22 (Hsp22) from Drosophila melanogaster (Fruit fly).